We begin with the raw amino-acid sequence, 1112 residues long: Electrogenic sodium bicarbonate cotransporter 4 (1112 aa).

Positions 1–13 (MKVEEKAGVKKLE) are enriched in basic and acidic residues. Disordered regions lie at residues 1–80 (MKVE…SSLG), 220–255 (KKPI…HHST), and 439–469 (GRSG…NEAE). Over 1–513 (MKVEEKAGVK…DFYDGFHIQS (513 aa)) the chain is Cytoplasmic. Composition is skewed to polar residues over residues 53–67 (QRVQ…SQQD) and 233–244 (SVSTTNRSSARS). A compositionally biased stretch (gly residues) spans 444–465 (SAGGGGSGGGAGGSGAGGGGSG). Residues 514 to 536 (ISAVLFIYLGCITNAITFGGLLG) traverse the membrane as a helical segment. Over 537 to 547 (DATDNYQGVME) the chain is Extracellular. The helical transmembrane segment at 548–579 (SFLGTAMAGSLFCLFSGQPLIILSSTGPILIF) threads the bilayer. The Cytoplasmic segment spans residues 580–598 (EKLLFDFSKANGLDYMEFR). Residues 599–620 (LWIGLHSAIQCLILVATDASFI) form a helical membrane-spanning segment. Over 621 to 734 (IKYITRFTEE…LGSSCQFVPD (114 aa)) the chain is Extracellular. Residues 735 to 753 (LALMSFILFFGTYSMTLTL) form a helical membrane-spanning segment. At 754 to 772 (KKFKFSRYFPTKVRTLVAD) the chain is on the cytoplasmic side. A helical membrane pass occupies residues 773–792 (FSIVFSILLFCGIDACFGLQ). At 793 to 820 (TPKLHVPNVIKPTRPDRGWFVAPFGKNP) the chain is on the extracellular side. A helical membrane pass occupies residues 821 to 839 (WWVYPASILPALLVTILIF). Residues 840–858 (MDQQITAVIVNRKENKLRK) lie on the Cytoplasmic side of the membrane. A helical transmembrane segment spans residues 859 to 875 (AAGYHLDLFWVGILMAL). The Extracellular portion of the chain corresponds to 876–880 (CSFMG). The chain crosses the membrane as a helical span at residues 881–900 (LPWYVAATVISIAHIDSLKM). Residues 901-920 (ETETSAPGEQPQFLGVREQR) lie on the Cytoplasmic side of the membrane. Residues 921–940 (VTGVMVFILTGISVFLAPIL) traverse the membrane as a helical segment. Residues 941–945 (KYIPM) lie on the Extracellular side of the membrane. Residues 946-966 (PVLYGVFLYMGVASLNGIQFW) form a helical membrane-spanning segment. The Cytoplasmic segment spans residues 967–992 (DRCKLFLMPAKHQPDHAFLRHVPLRR). Residues 993-1010 (IHLFTLVQILCLALLWIL) form a helical membrane-spanning segment. The Extracellular segment spans residues 1011–1015 (KSTMA). The chain crosses the membrane as a helical span at residues 1016 to 1033 (AIIFPVMILGLIIVRRLL). The Cytoplasmic portion of the chain corresponds to 1034–1112 (DLIFSQHDLA…KRSSSWSHSL (79 aa)). Positions 1055–1074 (KESDRKKRRKEVHENTDKEP) are enriched in basic and acidic residues. Positions 1055–1112 (KESDRKKRRKEVHENTDKEPQFLPPSVVKIPMEGIPSDPQNGIHCVGRKRSSSWSHSL) are disordered.

The protein belongs to the anion exchanger (TC 2.A.31) family. Observed in hepatocytes and in the apical region of bile duct intrahepatic cholangiocytes of liver. Also observed in uroepithelium cells lining the outer pelvic wall of the kidney (at protein level). Highly expressed in colon, distal colon, liver, kidney and testis. Moderate expression in duodenum and stomach and weak expression in heart. In kidney, very weakly expressed in the inner medulla, but abundantly expressed in cortex and outer medulla in the medullary thick ascending and cortical thick ascending limbs of the loop of Henle.

The protein localises to the basolateral cell membrane. The protein resides in the apical cell membrane. The enzyme catalyses 2 hydrogencarbonate(out) + Na(+)(out) = 2 hydrogencarbonate(in) + Na(+)(in). It catalyses the reaction 3 hydrogencarbonate(out) + Na(+)(out) = 3 hydrogencarbonate(in) + Na(+)(in). Mediates sodium- and bicarbonate-dependent electrogenic sodium bicarbonate cotransport, with a Na(+):HCO3(-) stoichiometry varying from 1:2 to 1:3. This is Electrogenic sodium bicarbonate cotransporter 4 from Rattus norvegicus (Rat).